The primary structure comprises 195 residues: Morphogenetic protein (195 aa).

Assembly factor active in membrane morphogenesis. In Pseudomonas phage phi6 (Bacteriophage phi-6), this protein is Morphogenetic protein (P12).